A 178-amino-acid polypeptide reads, in one-letter code: Ras-like protein (178 aa).

A GTP-binding site is contributed by 1–6 (GGVGKS). Residues 21-29 (YDPTIEDSY) carry the Effector region motif. Residues 46–50 (DTAGQ) and 105–108 (NKCD) contribute to the GTP site. Residue Cys-175 is modified to Cysteine methyl ester. Cys-175 carries S-geranylgeranyl cysteine lipidation. A propeptide spans 176–178 (SIL) (removed in mature form).

It belongs to the small GTPase superfamily. Ras family.

Its subcellular location is the cell membrane. It catalyses the reaction GTP + H2O = GDP + phosphate + H(+). Alternates between an inactive form bound to GDP and an active form bound to GTP. Activated by a guanine nucleotide-exchange factor (GEF) and inactivated by a GTPase-activating protein (GAP). Its function is as follows. Ras proteins bind GDP/GTP and possess intrinsic GTPase activity. The sequence is that of Ras-like protein from Artemia salina (Brine shrimp).